The primary structure comprises 628 residues: Probable alpha-L-arabinofuranosidase A (628 aa).

A signal peptide spans 1 to 25; that stretch reads MVAFSALSGVSALSLLLCLVQHAHG. N-linked (GlcNAc...) asparagine glycosylation is found at N36, N51, N74, N152, N171, N260, N359, and N493.

It belongs to the glycosyl hydrolase 51 family.

The protein localises to the secreted. It catalyses the reaction Hydrolysis of terminal non-reducing alpha-L-arabinofuranoside residues in alpha-L-arabinosides.. It functions in the pathway glycan metabolism; L-arabinan degradation. Its function is as follows. Alpha-L-arabinofuranosidase involved in the degradation of arabinoxylan, a major component of plant hemicellulose. Acts only on small linear 1,5-alpha-linked L-arabinofuranosyl oligosaccharides. This Aspergillus awamori (Black koji mold) protein is Probable alpha-L-arabinofuranosidase A (abfA).